The primary structure comprises 1693 residues: Latrophilin Cirl (1693 aa).

Residues 1–753 (MLPTILSISY…LFTMFDGNMR (753 aa)) lie on the Extracellular side of the membrane. The SUEL-type lectin domain maps to 25–114 (ACEGKKLTIE…KYLEAHYQCI (90 aa)). Residue N142 is glycosylated (N-linked (GlcNAc...) asparagine). Composition is skewed to polar residues over residues 185-198 (TAVT…STTA) and 256-265 (NVTSPSNTRI). The segment at 185–299 (TAVTHSTPWS…PGTAASGSVA (115 aa)) is disordered. N256 is a glycosylation site (N-linked (GlcNAc...) asparagine). A compositionally biased stretch (low complexity) spans 275-299 (DDGTLLTTKSSPNRPPGTAASGSVA). N-linked (GlcNAc...) asparagine glycosylation is found at N301, N340, N397, N641, N689, and N716. Residues 375-399 (YDEYDDDASSTTPAPSGGDCLHNSS) form a disordered region. Residues 564–740 (KKSKIYSSVV…AILMDVVDEH (177 aa)) form the GAIN-B domain. Cystine bridges form between C695-C722 and C710-C724. The tract at residues 695–740 (CVFWNYIDHAWSANGCSLESTNRTHSVCSCNHLTNFAILMDVVDEH) is GPS. A helical transmembrane segment spans residues 754 to 774 (IFIYISIGICVVFIVIALLTL). Topologically, residues 775–787 (KLFNGVFVKSART) are cytoplasmic. A helical transmembrane segment spans residues 788–808 (SIYTSIYLCLLAIELLFLLGI). Residues 809-814 (EQTETS) lie on the Extracellular side of the membrane. A helical transmembrane segment spans residues 815 to 835 (IFCGFITIFLHCAILSGTAWF). Over 836–861 (CYEAFHSYSTLTSDELLLEVDQTPKV) the chain is Cytoplasmic. The helical transmembrane segment at 862–882 (NCYYLLSYGLSLSVVAISLVI) threads the bilayer. The Extracellular portion of the chain corresponds to 883–906 (DPSTYTQNDYCVLMEANALFYATF). The chain crosses the membrane as a helical span at residues 907 to 927 (VVPVLVFFVAAIGYTFLSWII). At 928 to 954 (MCRKSRTGLKTKEHTRLASVRFDIRCS) the chain is on the cytoplasmic side. Residues 955–975 (FVFLLLLSAVWCSAYFYLRGA) form a helical membrane-spanning segment. Over 976–985 (KMDDDTADVY) the chain is Extracellular. A helical membrane pass occupies residues 986–1006 (GYCFICFNTLLGLYIFVFHCI). At 1007–1693 (QNEKIRREYR…VRCYLEPLAK (687 aa)) the chain is on the cytoplasmic side. S1142 is modified (phosphoserine). Disordered regions lie at residues 1156–1194 (HKQQ…LKTP), 1220–1247 (KPNS…LHSR), 1294–1319 (QQQL…AEQH), 1433–1521 (GGGS…SDER), and 1601–1673 (LAVN…QQRH). Residues S1239 and S1246 each carry the phosphoserine modification. Over residues 1294-1309 (QQQLRRQQLHQQQQQL) the composition is skewed to low complexity. Phosphoserine occurs at positions 1310 and 1311. Residues 1439 to 1464 (GGSVSSRSQQQQLKKQQQQQSLAQQR) are compositionally biased toward low complexity. Acidic residues-rich tracts occupy residues 1472 to 1486 (DDDD…EEAT) and 1496 to 1507 (CDEDEEEDESDL). Residues 1508-1521 (EHDAHGLPPQSDER) are compositionally biased toward basic and acidic residues. Positions 1630-1655 (LQKLSPQSTTSSSSHTSHSNPNLHPH) are enriched in low complexity. The span at 1656 to 1672 (QLTHPHPHQHPPHHQQR) shows a compositional bias: basic residues.

Belongs to the G-protein coupled receptor 2 family. LN-TM7 subfamily. As to quaternary structure, forms a heterodimer, consisting of a large extracellular region non-covalently linked to a seven-transmembrane moiety. Proteolytically cleaved into 2 subunits, an extracellular subunit and a seven-transmembrane subunit.

It localises to the cell membrane. The sequence is that of Latrophilin Cirl from Drosophila sechellia (Fruit fly).